A 394-amino-acid polypeptide reads, in one-letter code: Aspergillopepsin-1 (394 aa).

An N-terminal signal peptide occupies residues 1 to 20 (MVVFSKTAALVLGLSTAVSA). The propeptide at 21 to 69 (APAPTRKGFTINQIARPANKTRTVNLPGLYARSLAKFGGTVPQSVKEAA) is activation peptide. The Peptidase A1 domain occupies 85–391 (YLTPVTVGKS…NSEGPKLGFA (307 aa)). Active-site residues include aspartate 101 and aspartate 283. An intrachain disulfide couples cysteine 319 to cysteine 354.

The protein belongs to the peptidase A1 family.

It is found in the secreted. It carries out the reaction Hydrolysis of proteins with broad specificity. Generally favors hydrophobic residues in P1 and P1', but also accepts Lys in P1, which leads to activation of trypsinogen. Does not clot milk.. In terms of biological role, secreted aspartic endopeptidase that allows assimilation of proteinaceous substrates. The scissile peptide bond is attacked by a nucleophilic water molecule activated by two aspartic residues in the active site. Shows a broad primary substrate specificity. Favors hydrophobic residues at the P1 and P1' positions, but also accepts a lysine residue in the P1 position, leading to the activation of trypsinogen and chymotrypsinogen A. This is Aspergillopepsin-1 from Aspergillus niger.